A 361-amino-acid polypeptide reads, in one-letter code: Ribosomal RNA large subunit methyltransferase M (361 aa).

S-adenosyl-L-methionine is bound by residues serine 187, 220–223 (CPGG), aspartate 239, aspartate 259, and aspartate 276. Lysine 305 serves as the catalytic Proton acceptor.

Belongs to the class I-like SAM-binding methyltransferase superfamily. RNA methyltransferase RlmE family. RlmM subfamily. Monomer.

Its subcellular location is the cytoplasm. The enzyme catalyses cytidine(2498) in 23S rRNA + S-adenosyl-L-methionine = 2'-O-methylcytidine(2498) in 23S rRNA + S-adenosyl-L-homocysteine + H(+). In terms of biological role, catalyzes the 2'-O-methylation at nucleotide C2498 in 23S rRNA. The protein is Ribosomal RNA large subunit methyltransferase M of Shewanella putrefaciens (strain CN-32 / ATCC BAA-453).